Reading from the N-terminus, the 1224-residue chain is MNQDFEHQLSFHSNNNSNSNHHHSYNNSINSGSSSSGSNNSSNNNSFNDEIEGGEIQEEPYISSSSIRTSELDQKILFLSKDRNLSKRTGSEDPQYGSFFNTLSEPLILSQQSHQQHKKQNRDQHSSSSSSSSSSSSSSSRSKRSNQPPPLVGIAAINQQQQHLQKQKQQLQQQQIQIQLQKQQLQQQIVQHQTELQNKSTPSKTSSASSPPQNTLSAPAPPAPAPTSAPTSAPTSSSVSSLTQPQKPKSVQYSQPAPLEIREEKVDPNIKEEFENTESKISSIIQSMICPISPLRSPFNESIVYTNISSSSSDFDYNNSNSNNSNNNNNNNNSITENNTDKMINNQPSSTNSKKLKTNEIDSKDTSNNNLNGADFKKTTTTTTTTTTSSTSEPIKSPNSSSSTNSSASTTPTVKKEKLILKIPKLVVKSDSGTNKESNSSNSSSTTSTPKSKDLEEKKEKEKSEKEKGEKLEKSEKSDKSEKTEKTEKAEKTEKSEKSEKSEKTDQLEKAEKLEKEEKTEKKKTEKVEKAGKVEKKEKPKDKQTKQEKEKEKEKEKETEKEKEKKDKVSSKKDELQPIEEDKKKIGGKRKSINSSKPEFKSDSIDMDIDEPNPKSSSNYNDSDDDSENEIDKSDKRSQKKSKVESPPKSSKLSNGKDKKSTTTTTTSTSSSSSLPSLSSSSSSLPLPSSSSSSSSSSSSSSSSSSSSSSSSSSSTTSTKIKKEEPPPPPPQQPPPPPPQQPPPPPPPINPFSVSEHDKKIIEKETGKDLGSSRDRDNSSRTTNGRDSDRDRDSREGSRDRDRDRDRDRDRDRDRDRDRGRDRGNGDRGEGDRDRDRSGRSDRDRDRDRDRDRDRDRDRDRGNDRDRDRDRDRDRDRGRDRGSDRDRDRKDSNSNNNSNNNNNNNNNNNNNNNNNNNNKKDNNNNNNNNNNNNNKRDGNKDGSSSELTPKKTKQEEKLIRSQIDQIKEDAKDLKKLAKELQSKNQNECLEMYLQVGLKYLLTTHYMIEVNDPLPNIISFLSEISLFFSNTSRLALHFKDDPKASLCFKCESFCCIKMFCLKKDNLKHTRKEVSSVYSSFLPNSSSSSKSSSSSSSSSNQPANPATAPLTPNPGNPSESPSQASSSSNPTSTTPSATTTTTTTATTTPSTTATTTTTSNNNQPNTSHVNTKIAQYFKDTEDIFRGMDAWEKSILHSNIPGFHFNFFYQPYLEFIDQVKKESDKQS.

Disordered stretches follow at residues methionine 1 to isoleucine 67, glutamine 111 to leucine 151, glutamine 193 to isoleucine 270, aspartate 316 to lysine 416, serine 430 to lysine 957, and serine 1078 to valine 1167. The span at serine 10–asparagine 48 shows a compositional bias: low complexity. Acidic residues predominate over residues aspartate 49 to glutamate 58. Low complexity-rich tracts occupy residues serine 126–serine 140, glutamine 193–proline 212, and serine 228–serine 241. Residues leucine 242–glutamine 255 are compositionally biased toward polar residues. Positions glutamate 260–isoleucine 270 are enriched in basic and acidic residues. Positions aspartate 316–asparagine 338 are enriched in low complexity. Residues aspartate 341–serine 353 show a composition bias toward polar residues. Low complexity-rich tracts occupy residues threonine 379 to threonine 413 and serine 430 to proline 450. Basic and acidic residues-rich tracts occupy residues lysine 451–lysine 585 and glutamate 630–serine 646. A compositionally biased stretch (low complexity) spans threonine 662–threonine 719. Residues proline 727–asparagine 750 are compositionally biased toward pro residues. The span at serine 755 to serine 892 shows a compositional bias: basic and acidic residues. The span at asparagine 893–asparagine 933 shows a compositional bias: low complexity. Positions threonine 948–lysine 957 are enriched in basic and acidic residues. A coiled-coil region spans residues lysine 950–methionine 991. Composition is skewed to low complexity over residues serine 1078–leucine 1108 and asparagine 1114–serine 1165.

This is an uncharacterized protein from Dictyostelium discoideum (Social amoeba).